The primary structure comprises 127 residues: Aspartate 1-decarboxylase (127 aa).

Ser-25 serves as the catalytic Schiff-base intermediate with substrate; via pyruvic acid. Ser-25 is subject to Pyruvic acid (Ser). Substrate is bound at residue Thr-57. The active-site Proton donor is the Tyr-58. 73 to 75 (GAA) provides a ligand contact to substrate.

The protein belongs to the PanD family. In terms of assembly, heterooctamer of four alpha and four beta subunits. Pyruvate serves as cofactor. Is synthesized initially as an inactive proenzyme, which is activated by self-cleavage at a specific serine bond to produce a beta-subunit with a hydroxyl group at its C-terminus and an alpha-subunit with a pyruvoyl group at its N-terminus.

The protein localises to the cytoplasm. It carries out the reaction L-aspartate + H(+) = beta-alanine + CO2. It functions in the pathway cofactor biosynthesis; (R)-pantothenate biosynthesis; beta-alanine from L-aspartate: step 1/1. Catalyzes the pyruvoyl-dependent decarboxylation of aspartate to produce beta-alanine. The chain is Aspartate 1-decarboxylase from Neisseria meningitidis serogroup A / serotype 4A (strain DSM 15465 / Z2491).